A 189-amino-acid chain; its full sequence is MAEQLTDQALVERVQQGDKKAFNLLVSRYQNKVAGLLTRYVSRNDIPDVVQESFIKAYRSIESFRGESAFYTWLYRIAVNTAKNYLTAQGRRPPNEDILAEDAENYDVGTHLRDVDTPENEMLSSELERIVFDTIHNLPEDLKTAITLRELEGLSYEDIAEIMDCPVGTVRSRIFRAREMIENKIQPLM.

The segment at 1 to 153 (MAEQLTDQAL…TAITLRELEG (153 aa)) is binds RNAP core. The segment at 25–92 (LVSRYQNKVA…KNYLTAQGRR (68 aa)) is sigma-70 factor domain-2. Residues 48–61 (DVVQESFIKAYRSI) carry the Polymerase core binding motif. The tract at residues 129–180 (RIVFDTIHNLPEDLKTAITLRELEGLSYEDIAEIMDCPVGTVRSRIFRAREM) is sigma-70 factor domain-4. Residues 156 to 175 (YEDIAEIMDCPVGTVRSRIF) constitute a DNA-binding region (H-T-H motif).

The protein belongs to the sigma-70 factor family. ECF subfamily. In terms of assembly, interacts transiently with the RNAP catalytic core formed by RpoA, RpoB, RpoC and RpoZ (2 alpha, 1 beta, 1 beta' and 1 omega subunit) to form the RNAP holoenzyme that can initiate transcription. Interacts 1:1 with anti-sigma-E factor RseA which prevents binding to RNAP catalytic core.

The protein localises to the cytoplasm. Its activity is regulated as follows. ECF sigma-E is held in an inactive form by its cognate anti-sigma factor (RseA) until released by regulated intramembrane proteolysis (RIP). RIP occurs when an extracytoplasmic signal (periplasmic stress and excess LPS) triggers a concerted proteolytic cascade to transmit information and elicit cellular responses. The anti-sigma factor RseA is an inner membrane protein, binding sigma-E in the cytoplasm and RseB in the periplasm. RseA is first cut extracytoplasmically (site-1 protease, S1P, by DegS), then within the membrane itself (site-2 protease, S2P, by RseP), while cytoplasmic proteases (predominantly ClpX-ClpP) finish degrading the regulatory protein, liberating sigma-E. Degradation of RseA requires 2 signals to activate DegS; an outer membrane protein (OMP) signal activates DegS, while an LPS signal causes release of RseB from RseA, freeing RseA to be cleaved. Functionally, sigma factors are initiation factors that promote the attachment of RNA polymerase (RNAP) to specific initiation sites and are then released. Extracytoplasmic function (ECF) sigma-E controls the envelope stress response, responding to periplasmic protein stress, increased levels of periplasmic lipopolysaccharide (LPS) as well as heat shock and oxidative stress; it controls protein processing in the extracytoplasmic compartment. This Haemophilus influenzae (strain ATCC 51907 / DSM 11121 / KW20 / Rd) protein is ECF RNA polymerase sigma-E factor (rpoE).